The following is a 521-amino-acid chain: Zinc finger and BTB domain-containing protein 18 (521 aa).

In terms of domain architecture, BTB spans 24–91 (CDCTVLVGDA…MYEGKLQFKD (68 aa)). A disordered region spans residues 190-230 (DSASIPQTGGEAETHTAAAGKTADSPCSSTGSLSHRSATSM). Residues 197–212 (TGGEAETHTAAAGKTA) show a composition bias toward low complexity. Over residues 214–230 (SPCSSTGSLSHRSATSM) the composition is skewed to polar residues. C2H2-type zinc fingers lie at residues 369-391 (FMCP…LSTH), 409-431 (PTCS…ERTH), 437-459 (FTCT…AVVH), and 465-488 (HACK…RKFH).

Belongs to the krueppel C2H2-type zinc-finger protein family. ZBTB18 subfamily.

The protein resides in the nucleus. Transcriptional repressor that plays a role in various developmental processes. Specifically binds the consensus DNA sequence 5'-[AC]ACATCTG[GT][AC]-3' which contains the E box core, and acts by recruiting chromatin remodeling multiprotein complexes. The polypeptide is Zinc finger and BTB domain-containing protein 18 (zbtb18) (Xenopus tropicalis (Western clawed frog)).